Here is a 458-residue protein sequence, read N- to C-terminus: tRNA modification GTPase MnmE (458 aa).

Arg-22, Glu-84, and Arg-123 together coordinate (6S)-5-formyl-5,6,7,8-tetrahydrofolate. Residues 220 to 379 (GIATAIIGRP…LEKAIADLFF (160 aa)) enclose the TrmE-type G domain. Position 230 (Asn-230) interacts with K(+). Residues 230-235 (NVGKSS), 249-255 (TDIAGTT), and 274-277 (DTAG) each bind GTP. Ser-234 is a Mg(2+) binding site. Residues Thr-249, Ile-251, and Thr-254 each contribute to the K(+) site. Position 255 (Thr-255) interacts with Mg(2+). Lys-458 lines the (6S)-5-formyl-5,6,7,8-tetrahydrofolate pocket.

This sequence belongs to the TRAFAC class TrmE-Era-EngA-EngB-Septin-like GTPase superfamily. TrmE GTPase family. In terms of assembly, homodimer. Heterotetramer of two MnmE and two MnmG subunits. Requires K(+) as cofactor.

The protein localises to the cytoplasm. Functionally, exhibits a very high intrinsic GTPase hydrolysis rate. Involved in the addition of a carboxymethylaminomethyl (cmnm) group at the wobble position (U34) of certain tRNAs, forming tRNA-cmnm(5)s(2)U34. The sequence is that of tRNA modification GTPase MnmE from Bacillus cereus (strain ZK / E33L).